The sequence spans 274 residues: 2,3,4,5-tetrahydropyridine-2,6-dicarboxylate N-succinyltransferase (274 aa).

The substrate site is built by Arg-107 and Asp-144.

This sequence belongs to the transferase hexapeptide repeat family. In terms of assembly, homotrimer.

Its subcellular location is the cytoplasm. The catalysed reaction is (S)-2,3,4,5-tetrahydrodipicolinate + succinyl-CoA + H2O = (S)-2-succinylamino-6-oxoheptanedioate + CoA. It functions in the pathway amino-acid biosynthesis; L-lysine biosynthesis via DAP pathway; LL-2,6-diaminopimelate from (S)-tetrahydrodipicolinate (succinylase route): step 1/3. In Cereibacter sphaeroides (strain ATCC 17029 / ATH 2.4.9) (Rhodobacter sphaeroides), this protein is 2,3,4,5-tetrahydropyridine-2,6-dicarboxylate N-succinyltransferase.